The chain runs to 517 residues: Probable bifunctional methylthioribulose-1-phosphate dehydratase/enolase-phosphatase E1 (517 aa).

The interval 1–242 is methylthioribulose-1-phosphate dehydratase; that stretch reads MACSGCSCEA…CIKLYQLGID (242 aa). Cysteine 114 lines the substrate pocket. Residues histidine 132 and histidine 134 each contribute to the Zn(2+) site. Glutamate 157 functions as the Proton donor/acceptor; for methylthioribulose-1-phosphate dehydratase activity in the catalytic mechanism. Histidine 207 lines the Zn(2+) pocket. Positions 278-517 are enolase-phosphatase E1; the sequence is VVLDIEGTTT…FRTIKSFSEI (240 aa). Mg(2+) contacts are provided by aspartate 281 and glutamate 283. Residues 416-417 and lysine 450 each bind substrate; that span reads SS. Aspartate 476 contributes to the Mg(2+) binding site.

It in the N-terminal section; belongs to the aldolase class II family. MtnB subfamily. This sequence in the C-terminal section; belongs to the HAD-like hydrolase superfamily. MasA/MtnC family. It depends on Zn(2+) as a cofactor. Mg(2+) serves as cofactor.

It catalyses the reaction 5-(methylsulfanyl)-D-ribulose 1-phosphate = 5-methylsulfanyl-2,3-dioxopentyl phosphate + H2O. It carries out the reaction 5-methylsulfanyl-2,3-dioxopentyl phosphate + H2O = 1,2-dihydroxy-5-(methylsulfanyl)pent-1-en-3-one + phosphate. The protein operates within amino-acid biosynthesis; L-methionine biosynthesis via salvage pathway; L-methionine from S-methyl-5-thio-alpha-D-ribose 1-phosphate: step 2/6. It functions in the pathway amino-acid biosynthesis; L-methionine biosynthesis via salvage pathway; L-methionine from S-methyl-5-thio-alpha-D-ribose 1-phosphate: step 3/6. Its pathway is amino-acid biosynthesis; L-methionine biosynthesis via salvage pathway; L-methionine from S-methyl-5-thio-alpha-D-ribose 1-phosphate: step 4/6. The chain is Probable bifunctional methylthioribulose-1-phosphate dehydratase/enolase-phosphatase E1 from Zea mays (Maize).